Reading from the N-terminus, the 339-residue chain is NADH-quinone oxidoreductase subunit H (339 aa).

9 helical membrane passes run 10–30, 50–70, 82–102, 115–135, 161–181, 187–207, 235–255, 275–295, and 310–330; these read FPLI…ILCV, PNVV…KLLF, ILFI…WAVV, VGVL…IIAG, MGLV…SGII, IPWW…ISVL, MGFA…SAMT, IPGF…FLWI, and LGWK…SSVL.

Belongs to the complex I subunit 1 family. As to quaternary structure, NDH-1 is composed of 14 different subunits. Subunits NuoA, H, J, K, L, M, N constitute the membrane sector of the complex.

The protein resides in the cell inner membrane. It carries out the reaction a quinone + NADH + 5 H(+)(in) = a quinol + NAD(+) + 4 H(+)(out). In terms of biological role, NDH-1 shuttles electrons from NADH, via FMN and iron-sulfur (Fe-S) centers, to quinones in the respiratory chain. The immediate electron acceptor for the enzyme in this species is believed to be ubiquinone. Couples the redox reaction to proton translocation (for every two electrons transferred, four hydrogen ions are translocated across the cytoplasmic membrane), and thus conserves the redox energy in a proton gradient. This subunit may bind ubiquinone. The sequence is that of NADH-quinone oxidoreductase subunit H from Rickettsia canadensis (strain McKiel).